A 404-amino-acid chain; its full sequence is Schlafen-like protein 1 (404 aa).

2 disordered regions span residues 1 to 31 (MTPM…LPTE) and 139 to 170 (GPLS…AWPT). The span at 7–16 (SVQTQVSEPF) shows a compositional bias: polar residues. Low complexity predominate over residues 152–165 (GLSPGPNPGSGVPL). 258–265 (GVEDSGLV) is an ATP binding site. The stretch at 365–395 (RWLVELGKLEERVKVLTMEKEQLQQQLQQHG) forms a coiled coil.

It belongs to the Schlafen family. Subgroup I subfamily.

This chain is Schlafen-like protein 1 (SLFNL1), found in Macaca fascicularis (Crab-eating macaque).